A 251-amino-acid polypeptide reads, in one-letter code: Developmental protein SEPALLATA 3 (251 aa).

One can recognise an MADS-box domain in the interval 3 to 57 (RGRVELKRIENKINRQVTFAKRRNGLLKKAYELSVLCDAEVALIIFSNRGKLYEF). The region spanning 91 to 181 (ELSSQQEYLK…RLRLADGYQM (91 aa)) is the K-box domain. The stretch at 94–177 (SQQEYLKLKE…NKTLRLRLAD (84 aa)) forms a coiled coil.

Forms homodimers. Heterodimer with AP1 or AG capable of binding to CArG-box sequences. Binds AP3/PI to form a ternary complex. Interacts with AGL16. Interacts with TT16/AGL32.

The protein localises to the nucleus. Functionally, probable transcription factor active in inflorescence development and floral organogenesis. Functions with SEPALLATA1/AGL2 and SEPALLATA2/AGL4 to ensure proper development of petals, stamens and carpels and to prevent the indeterminate growth of the flower meristem. Interacts with APETALA1, AGAMOUS or APETALA3/PISTILLATA to form complexes, that could be involved in genes regulation during floral meristem development. Binds specifically to the CArG box DNA sequence 5'-CC (A/T)6 GG-3'. The protein is Developmental protein SEPALLATA 3 (SEP3) of Arabidopsis thaliana (Mouse-ear cress).